A 148-amino-acid polypeptide reads, in one-letter code: Macrodomain Ter protein (148 aa).

Belongs to the MatP family. In terms of assembly, homodimer.

The protein localises to the cytoplasm. Functionally, required for spatial organization of the terminus region of the chromosome (Ter macrodomain) during the cell cycle. Prevents early segregation of duplicated Ter macrodomains during cell division. Binds specifically to matS, which is a 13 bp signature motif repeated within the Ter macrodomain. The protein is Macrodomain Ter protein of Haemophilus ducreyi (strain 35000HP / ATCC 700724).